The chain runs to 241 residues: 2-C-methyl-D-erythritol 4-phosphate cytidylyltransferase (241 aa).

This sequence belongs to the IspD/TarI cytidylyltransferase family. IspD subfamily.

The enzyme catalyses 2-C-methyl-D-erythritol 4-phosphate + CTP + H(+) = 4-CDP-2-C-methyl-D-erythritol + diphosphate. It functions in the pathway isoprenoid biosynthesis; isopentenyl diphosphate biosynthesis via DXP pathway; isopentenyl diphosphate from 1-deoxy-D-xylulose 5-phosphate: step 2/6. Its function is as follows. Catalyzes the formation of 4-diphosphocytidyl-2-C-methyl-D-erythritol from CTP and 2-C-methyl-D-erythritol 4-phosphate (MEP). This chain is 2-C-methyl-D-erythritol 4-phosphate cytidylyltransferase, found in Alkaliphilus metalliredigens (strain QYMF).